The sequence spans 484 residues: tRNA sulfurtransferase (484 aa).

The region spanning 56-158 (NCLKKALSKV…GNRAYFYTEV (103 aa)) is the THUMP domain. ATP contacts are provided by residues 176–177 (LV), Lys-257, Gly-279, and Gln-288. Residues Cys-336 and Cys-444 are joined by a disulfide bond. In terms of domain architecture, Rhodanese spans 396–479 (APEGAVIVDL…TRNAVPPSSQ (84 aa)). The active-site Cysteine persulfide intermediate is Cys-444.

It belongs to the ThiI family.

The protein localises to the cytoplasm. It catalyses the reaction [ThiI sulfur-carrier protein]-S-sulfanyl-L-cysteine + a uridine in tRNA + 2 reduced [2Fe-2S]-[ferredoxin] + ATP + H(+) = [ThiI sulfur-carrier protein]-L-cysteine + a 4-thiouridine in tRNA + 2 oxidized [2Fe-2S]-[ferredoxin] + AMP + diphosphate. It carries out the reaction [ThiS sulfur-carrier protein]-C-terminal Gly-Gly-AMP + S-sulfanyl-L-cysteinyl-[cysteine desulfurase] + AH2 = [ThiS sulfur-carrier protein]-C-terminal-Gly-aminoethanethioate + L-cysteinyl-[cysteine desulfurase] + A + AMP + 2 H(+). It participates in cofactor biosynthesis; thiamine diphosphate biosynthesis. Its function is as follows. Catalyzes the ATP-dependent transfer of a sulfur to tRNA to produce 4-thiouridine in position 8 of tRNAs, which functions as a near-UV photosensor. Also catalyzes the transfer of sulfur to the sulfur carrier protein ThiS, forming ThiS-thiocarboxylate. This is a step in the synthesis of thiazole, in the thiamine biosynthesis pathway. The sulfur is donated as persulfide by IscS. The protein is tRNA sulfurtransferase of Pyrobaculum aerophilum (strain ATCC 51768 / DSM 7523 / JCM 9630 / CIP 104966 / NBRC 100827 / IM2).